A 223-amino-acid polypeptide reads, in one-letter code: Small ribosomal subunit protein uS3 (223 aa).

Residues 39–117 enclose the KH type-2 domain; the sequence is IREFLRKKPS…RPELNAKLVA (79 aa).

It belongs to the universal ribosomal protein uS3 family. As to quaternary structure, part of the 30S ribosomal subunit. Forms a tight complex with proteins S10 and S14.

In terms of biological role, binds the lower part of the 30S subunit head. Binds mRNA in the 70S ribosome, positioning it for translation. The sequence is that of Small ribosomal subunit protein uS3 from Chlamydia abortus (strain DSM 27085 / S26/3) (Chlamydophila abortus).